The primary structure comprises 362 residues: 3-isopropylmalate dehydrogenase (362 aa).

78 to 91 (GYAWDNLPRSQRPE) is an NAD(+) binding site. Substrate-binding residues include arginine 98, arginine 108, arginine 136, and aspartate 226. 3 residues coordinate Mg(2+): aspartate 226, aspartate 250, and aspartate 254. Residue 284-296 (GSAPDIAGQDKAN) participates in NAD(+) binding.

This sequence belongs to the isocitrate and isopropylmalate dehydrogenases family. LeuB type 1 subfamily. As to quaternary structure, homodimer. Mg(2+) serves as cofactor. Requires Mn(2+) as cofactor.

The protein resides in the cytoplasm. It carries out the reaction (2R,3S)-3-isopropylmalate + NAD(+) = 4-methyl-2-oxopentanoate + CO2 + NADH. It functions in the pathway amino-acid biosynthesis; L-leucine biosynthesis; L-leucine from 3-methyl-2-oxobutanoate: step 3/4. Functionally, catalyzes the oxidation of 3-carboxy-2-hydroxy-4-methylpentanoate (3-isopropylmalate) to 3-carboxy-4-methyl-2-oxopentanoate. The product decarboxylates to 4-methyl-2 oxopentanoate. The polypeptide is 3-isopropylmalate dehydrogenase (leuB) (Synechocystis sp. (strain ATCC 27184 / PCC 6803 / Kazusa)).